The following is a 516-amino-acid chain: Levanbiose-producing levanase (516 aa).

Residues 1 to 5 lie on the Cytoplasmic side of the membrane; sequence MNYIK. Residues 6–26 form a helical membrane-spanning segment; that stretch reads AGKWLTVFLTFLGILLFIDLF. The Extracellular segment spans residues 27-516; that stretch reads PKEEHDQKTK…TVKHFDSIHE (490 aa). Substrate contacts are provided by residues 55-58, 116-117, 181-182, Glu-230, and Trp-318; these read WKND, WT, and RD. Asp-58 is an active-site residue.

The protein belongs to the glycosyl hydrolase 32 family.

The protein resides in the cell membrane. It catalyses the reaction Hydrolysis of (2-&gt;6)-beta-D-fructofuranan, to remove successive disaccharide residues as levanbiose, i.e. 6-(beta-D-fructofuranosyl)-D-fructose, from the end of the chain.. Functionally, catalyzes the degradation of levan mainly into levanbiose (difructose). Is not active on sucrose. The polypeptide is Levanbiose-producing levanase (levB) (Bacillus subtilis (strain 168)).